Reading from the N-terminus, the 374-residue chain is Phosphate acyltransferase (374 aa).

This sequence belongs to the PlsX family. In terms of assembly, homodimer. Probably interacts with PlsY.

The protein resides in the cytoplasm. It catalyses the reaction a fatty acyl-[ACP] + phosphate = an acyl phosphate + holo-[ACP]. It participates in lipid metabolism; phospholipid metabolism. Functionally, catalyzes the reversible formation of acyl-phosphate (acyl-PO(4)) from acyl-[acyl-carrier-protein] (acyl-ACP). This enzyme utilizes acyl-ACP as fatty acyl donor, but not acyl-CoA. This Gluconacetobacter diazotrophicus (strain ATCC 49037 / DSM 5601 / CCUG 37298 / CIP 103539 / LMG 7603 / PAl5) protein is Phosphate acyltransferase.